Here is a 449-residue protein sequence, read N- to C-terminus: GTPase Der (449 aa).

2 EngA-type G domains span residues 4-174 (PIVA…PPKT) and 183-358 (LRIA…VQRQ). Residues 10–17 (GRPNVGKS), 57–61 (DTAGV), 126–129 (NKCD), 189–196 (GRPNVGKS), 236–240 (DTAGI), and 301–304 (NKWD) each bind GTP. The region spanning 359–444 (KRVPTSELNN…PIVIVFRSRE (86 aa)) is the KH-like domain.

It belongs to the TRAFAC class TrmE-Era-EngA-EngB-Septin-like GTPase superfamily. EngA (Der) GTPase family. Associates with the 50S ribosomal subunit.

Functionally, GTPase that plays an essential role in the late steps of ribosome biogenesis. The protein is GTPase Der of Chloroflexus aurantiacus (strain ATCC 29366 / DSM 635 / J-10-fl).